Reading from the N-terminus, the 213-residue chain is Chloramphenicol acetyltransferase 2 (213 aa).

Catalysis depends on His189, which acts as the Proton acceptor.

Belongs to the chloramphenicol acetyltransferase family. Homotrimer.

It catalyses the reaction chloramphenicol + acetyl-CoA = chloramphenicol 3-acetate + CoA. Functionally, this enzyme is an effector of chloramphenicol resistance in bacteria. This chain is Chloramphenicol acetyltransferase 2 (cmlA), found in Escherichia coli.